Here is an 83-residue protein sequence, read N- to C-terminus: Acid shock protein (83 aa).

The signal sequence occupies residues 1-21; that stretch reads MKKVLALVVAAAMGLSSAAFA. The segment covering 22–40 has biased composition (low complexity); it reads AETATPAKTATPAKTTQNT. The propeptide occupies 22–56; that stretch reads AETATPAKTATPAKTTQNTQHHKKQHKKTVEQKAQ. Residues 22–83 form a disordered region; it reads AETATPAKTA…TSKTTSQPAA (62 aa). Residues 57–70 show a composition bias toward basic residues; that stretch reads AAKKHQKKDGKKAP. Residues 71–83 are compositionally biased toward low complexity; that stretch reads AKSTSKTTSQPAA.

This sequence belongs to the Asr family. In terms of processing, proteolytic processing gives rise to the active protein.

The protein localises to the periplasm. Its function is as follows. Required for growth and/or survival at acidic conditions. The protein is Acid shock protein of Salmonella heidelberg (strain SL476).